The chain runs to 255 residues: Thiazole synthase (255 aa).

Catalysis depends on Lys-95, which acts as the Schiff-base intermediate with DXP. Residues Gly-156, 182–183, and 204–205 each bind 1-deoxy-D-xylulose 5-phosphate; these read AG and NT.

This sequence belongs to the ThiG family. As to quaternary structure, homotetramer. Forms heterodimers with either ThiH or ThiS.

It is found in the cytoplasm. The catalysed reaction is [ThiS sulfur-carrier protein]-C-terminal-Gly-aminoethanethioate + 2-iminoacetate + 1-deoxy-D-xylulose 5-phosphate = [ThiS sulfur-carrier protein]-C-terminal Gly-Gly + 2-[(2R,5Z)-2-carboxy-4-methylthiazol-5(2H)-ylidene]ethyl phosphate + 2 H2O + H(+). The protein operates within cofactor biosynthesis; thiamine diphosphate biosynthesis. Functionally, catalyzes the rearrangement of 1-deoxy-D-xylulose 5-phosphate (DXP) to produce the thiazole phosphate moiety of thiamine. Sulfur is provided by the thiocarboxylate moiety of the carrier protein ThiS. In vitro, sulfur can be provided by H(2)S. In Photorhabdus laumondii subsp. laumondii (strain DSM 15139 / CIP 105565 / TT01) (Photorhabdus luminescens subsp. laumondii), this protein is Thiazole synthase.